The chain runs to 599 residues: Elongation factor 4 (599 aa).

A tr-type G domain is found at 3 to 185 (KNIRNFSIIA…AIVERIPPPS (183 aa)). GTP contacts are provided by residues 15 to 20 (DHGKST) and 132 to 135 (NKID).

It belongs to the TRAFAC class translation factor GTPase superfamily. Classic translation factor GTPase family. LepA subfamily.

The protein localises to the cell membrane. The catalysed reaction is GTP + H2O = GDP + phosphate + H(+). In terms of biological role, required for accurate and efficient protein synthesis under certain stress conditions. May act as a fidelity factor of the translation reaction, by catalyzing a one-codon backward translocation of tRNAs on improperly translocated ribosomes. Back-translocation proceeds from a post-translocation (POST) complex to a pre-translocation (PRE) complex, thus giving elongation factor G a second chance to translocate the tRNAs correctly. Binds to ribosomes in a GTP-dependent manner. This is Elongation factor 4 from Syntrophomonas wolfei subsp. wolfei (strain DSM 2245B / Goettingen).